The chain runs to 449 residues: Glucose-6-phosphate isomerase (449 aa).

E290 functions as the Proton donor in the catalytic mechanism. Active-site residues include H311 and K425.

This sequence belongs to the GPI family.

It localises to the cytoplasm. The enzyme catalyses alpha-D-glucose 6-phosphate = beta-D-fructose 6-phosphate. It participates in carbohydrate biosynthesis; gluconeogenesis. Its pathway is carbohydrate degradation; glycolysis; D-glyceraldehyde 3-phosphate and glycerone phosphate from D-glucose: step 2/4. In terms of biological role, catalyzes the reversible isomerization of glucose-6-phosphate to fructose-6-phosphate. The chain is Glucose-6-phosphate isomerase from Clostridioides difficile (strain 630) (Peptoclostridium difficile).